The chain runs to 312 residues: Malate dehydrogenase (312 aa).

NAD(+)-binding positions include 7–13 (GAAGGIG) and D34. 2 residues coordinate substrate: R81 and R87. NAD(+) is bound by residues N94 and 117–119 (ITN). N119 and R153 together coordinate substrate. Catalysis depends on H177, which acts as the Proton acceptor. M227 lines the NAD(+) pocket.

The protein belongs to the LDH/MDH superfamily. MDH type 1 family. Homodimer.

The enzyme catalyses (S)-malate + NAD(+) = oxaloacetate + NADH + H(+). In terms of biological role, catalyzes the reversible oxidation of malate to oxaloacetate. This is Malate dehydrogenase from Salmonella dublin (strain CT_02021853).